A 311-amino-acid polypeptide reads, in one-letter code: 4-hydroxy-3-methylbut-2-enyl diphosphate reductase (311 aa).

Cys12 is a binding site for [4Fe-4S] cluster. (2E)-4-hydroxy-3-methylbut-2-enyl diphosphate is bound by residues His41 and His74. His41 and His74 together coordinate dimethylallyl diphosphate. His41 and His74 together coordinate isopentenyl diphosphate. Cys96 contacts [4Fe-4S] cluster. His124 serves as a coordination point for (2E)-4-hydroxy-3-methylbut-2-enyl diphosphate. His124 lines the dimethylallyl diphosphate pocket. His124 contributes to the isopentenyl diphosphate binding site. The active-site Proton donor is Glu126. Thr167 is a binding site for (2E)-4-hydroxy-3-methylbut-2-enyl diphosphate. Cys197 is a binding site for [4Fe-4S] cluster. Residues Ser225, Ser226, Asn227, and Ser269 each contribute to the (2E)-4-hydroxy-3-methylbut-2-enyl diphosphate site. 4 residues coordinate dimethylallyl diphosphate: Ser225, Ser226, Asn227, and Ser269. Positions 225, 226, 227, and 269 each coordinate isopentenyl diphosphate.

Belongs to the IspH family. It depends on [4Fe-4S] cluster as a cofactor.

The catalysed reaction is isopentenyl diphosphate + 2 oxidized [2Fe-2S]-[ferredoxin] + H2O = (2E)-4-hydroxy-3-methylbut-2-enyl diphosphate + 2 reduced [2Fe-2S]-[ferredoxin] + 2 H(+). The enzyme catalyses dimethylallyl diphosphate + 2 oxidized [2Fe-2S]-[ferredoxin] + H2O = (2E)-4-hydroxy-3-methylbut-2-enyl diphosphate + 2 reduced [2Fe-2S]-[ferredoxin] + 2 H(+). The protein operates within isoprenoid biosynthesis; dimethylallyl diphosphate biosynthesis; dimethylallyl diphosphate from (2E)-4-hydroxy-3-methylbutenyl diphosphate: step 1/1. It participates in isoprenoid biosynthesis; isopentenyl diphosphate biosynthesis via DXP pathway; isopentenyl diphosphate from 1-deoxy-D-xylulose 5-phosphate: step 6/6. Catalyzes the conversion of 1-hydroxy-2-methyl-2-(E)-butenyl 4-diphosphate (HMBPP) into a mixture of isopentenyl diphosphate (IPP) and dimethylallyl diphosphate (DMAPP). Acts in the terminal step of the DOXP/MEP pathway for isoprenoid precursor biosynthesis. The protein is 4-hydroxy-3-methylbut-2-enyl diphosphate reductase of Aeromonas hydrophila subsp. hydrophila (strain ATCC 7966 / DSM 30187 / BCRC 13018 / CCUG 14551 / JCM 1027 / KCTC 2358 / NCIMB 9240 / NCTC 8049).